The primary structure comprises 208 residues: Segregation and condensation protein B (208 aa).

Belongs to the ScpB family. Homodimer. Homodimerization may be required to stabilize the binding of ScpA to the Smc head domains. Component of a cohesin-like complex composed of ScpA, ScpB and the Smc homodimer, in which ScpA and ScpB bind to the head domain of Smc. The presence of the three proteins is required for the association of the complex with DNA.

It localises to the cytoplasm. Participates in chromosomal partition during cell division. May act via the formation of a condensin-like complex containing Smc and ScpA that pull DNA away from mid-cell into both cell halves. The polypeptide is Segregation and condensation protein B (Mycoplasma pneumoniae (strain ATCC 29342 / M129 / Subtype 1) (Mycoplasmoides pneumoniae)).